The chain runs to 1269 residues: Protein strawberry notch homolog 1 (1269 aa).

The disordered stretch occupies residues 21-47 (NDLFDVDGGDAGLATPTPPSVQQQQPP). Lysine 113 bears the N6-acetyllysine mark. Phosphoserine is present on residues serine 126 and serine 178. The residue at position 377 (lysine 377) is an N6-acetyllysine. The disordered stretch occupies residues 652–725 (PSNNSSPRDS…SLITSQDAVE (74 aa)). Residues serine 656, serine 657, and serine 661 each carry the phosphoserine modification. The segment covering 679–693 (SGSESDVSDNEESDY) has biased composition (acidic residues). 2 positions are modified to phosphoserine: serine 700 and serine 701. Residues 719–746 (TSQDAVERAQQMKKDLLDKLEKLAEDLP) are a coiled coil. Lysine 1098 is subject to N6-acetyllysine. At serine 1262 the chain carries Phosphoserine.

The protein belongs to the SBNO family.

Its subcellular location is the nucleus. In terms of biological role, plays a crucial role in the regulation of neural stem cells (NSCs) proliferation. Enhances the phosphorylation of GSK3B through the PI3K-Akt signaling pathway, thereby upregulating the Wnt/beta-catenin signaling pathway and promoting the proliferation of NSCs. Improves ischemic stroke recovery while inhibiting neuroinflammation through small extracellular vesicles (sEVs)-mediated mechanism. Enhances the secretion of sEVs from NSCs, which in turn inhibit both the MAPK and NF-kappaB pathways in microglia. This inhibition suppresses the pro-inflammatory M1 polarization of microglia, promoting a shift towards the M2 anti-inflammatory phenotype, which is beneficial for reducing neuroinflammation. This chain is Protein strawberry notch homolog 1 (Sbno1), found in Rattus norvegicus (Rat).